Reading from the N-terminus, the 726-residue chain is Methyltransferase FGSG_00040 (726 aa).

TPR repeat units lie at residues 187–220, 224–257, and 258–291; these read SSDI…GQNV, QLAF…AMPS, and EKSL…YPEN. The 196-residue stretch at 336–531 folds into the SET domain; sequence APVEIRESPG…AKTEIFFCYR (196 aa). Tyr-530 contacts S-adenosyl-L-methionine.

Belongs to the class V-like SAM-binding methyltransferase superfamily.

It functions in the pathway mycotoxin biosynthesis. Its function is as follows. Methyltransferase; part of the gene cluster that mediates the biosynthesis of gramillins A and B, bicyclic lipopeptides that induce cell death in maize leaves but not in wheat leaves. The nonribosomal peptide synthetase GRA1 incorporates respectively a glutamic adic (Glu), a leucine (Leu), a serine (Ser), a hydroxyglutamine (HOGln), a 2-amino decanoic acid, and 2 cysteins (CysB and CysA). The biosynthesis of 2-amino decanoic acid incorporated in gramillins could be initiated by a fatty acid synthase composed of the alpha and beta subunits FGSG_00036 and FGSG_11656. The cytochrome P450 monooxygenase FGSG_15680 could hydroxylate the fatty acid chain. Subsequent oxidation to the ketone by the oxidoreductase FGSG_00048 and transamination by aminotransferase FGSG_00049 could form 2-amino-decanoic acid. On the other hand, FGSG_15680 could also be responsible for the HO-modified glutamine at the gamma-position. Whether hydroxylation occurs on the fully assembled product or on the Gln residue prior to assembly into the gramillins requires further proof. The thioredoxin FGSG_00043 could also be required for the disulfide-bond formation between CysA and CysB. The specific involvement of the remaining proteins from the cluster is more difficult to discern, but could have broader regulatory (FGSG_00040 and FGSG_11657) or enzymatic functions (FGSG_00044 and FGSG_00045). The final C-domain of GRA1 does not possess the expected sequence of a termination CT domain, often implicated in macrocyclization and release of a cyclopeptidein fungal NRPs; and the thioesterase FGSG_00047 may act in concert with the terminal C-domain of GRA1 to catalyze the formation of the macrocyclic anhydride and release of the products. This Gibberella zeae (strain ATCC MYA-4620 / CBS 123657 / FGSC 9075 / NRRL 31084 / PH-1) (Wheat head blight fungus) protein is Methyltransferase FGSG_00040.